The chain runs to 360 residues: Probable butyrate kinase (360 aa).

This sequence belongs to the acetokinase family.

Its subcellular location is the cytoplasm. It catalyses the reaction butanoate + ATP = butanoyl phosphate + ADP. The sequence is that of Probable butyrate kinase from Enterococcus faecalis (strain ATCC 700802 / V583).